Here is a 148-residue protein sequence, read N- to C-terminus: Endoribonuclease YbeY (148 aa).

Zn(2+) contacts are provided by H112, H116, and H122.

This sequence belongs to the endoribonuclease YbeY family. Requires Zn(2+) as cofactor.

It is found in the cytoplasm. Its function is as follows. Single strand-specific metallo-endoribonuclease involved in late-stage 70S ribosome quality control and in maturation of the 3' terminus of the 16S rRNA. The polypeptide is Endoribonuclease YbeY (Albidiferax ferrireducens (strain ATCC BAA-621 / DSM 15236 / T118) (Rhodoferax ferrireducens)).